We begin with the raw amino-acid sequence, 273 residues long: HUWE1-associated protein modifying stress responses 2 (273 aa).

3 disordered regions span residues 146–181, 204–230, and 251–273; these read GKVP…SSSV, ISMR…FLED, and KRTS…NRMV. Pro residues predominate over residues 149 to 165; sequence PPAPPPPRTPRTPPKPP. Composition is skewed to polar residues over residues 170–181, 208–218, and 254–267; these read SQAVATESSSSV, SGDSPQDSGVA, and SAQC…SPIQ. The tract at residues 249 to 273 is nuclear localization signal; that stretch reads IRKRTSAQCSDGITDSPIQKRNRMV.

This sequence belongs to the HAPSTR1 family. In terms of assembly, homooligomer. Heterooligomer with HAPSTR1; the interaction is direct and stabilizes HAPSTR1 independently of HUWE1. Interacts with HUWE1. Expressed in a tissue-restricted manner compared to HAPSTR1.

It localises to the nucleus. Its function is as follows. Together with HAPSTR1 plays a central regulatory role in the cellular response to molecular stressors, such as DNA damage, nutrient scarcity, and protein misfolding. Regulates these multiple stress response signaling pathways by stabilizing HAPSTR1, but also independently of HAPSTR1. The polypeptide is HUWE1-associated protein modifying stress responses 2 (Homo sapiens (Human)).